The chain runs to 334 residues: RNA ligase 2 (334 aa).

The adenylyltransferase stretch occupies residues 1 to 234; the sequence is MFKKYSSLEN…KCKNSKFSEK (234 aa). 6 residues coordinate AMP: E34, K35, I36, N40, R55, and E99. K35 functions as the N6-AMP-lysine intermediate in the catalytic mechanism. Mg(2+) contacts are provided by I162, L164, N166, E204, and Y206. AMP is bound by residues K225 and K227.

Belongs to the RNA ligase 2 family. It depends on Mg(2+) as a cofactor. The cofactor is Mn(2+).

It catalyses the reaction ATP + (ribonucleotide)n-3'-hydroxyl + 5'-phospho-(ribonucleotide)m = (ribonucleotide)n+m + AMP + diphosphate.. In terms of biological role, repairs 3'-OH/5'-PO4 nicks in duplex RNA or RNA:DNA hybrid in which the broken 3'-OH strand is RNA. The nick ligation reaction entails three nucleotidyl transfer steps. In the first step, the RNA ligase reacts with ATP in the absence of nucleic acid to form a covalent ligase-AMP intermediate and release pyrophosphate. In step 2, the ligase-AMP binds to the nicked duplex nucleic acid and transfers the adenylate to the 5'-PO4 terminus to form an adenylylated nicked intermediate. In step 3, the RNA ligase directs the attack of the nick 3'-OH on the 5'-phosphoanhydride linkage, resulting in a repaired 3' - 5' phosphodiester and release of AMP. This is RNA ligase 2 (Y10A) from Enterobacteria phage T4 (Bacteriophage T4).